We begin with the raw amino-acid sequence, 508 residues long: Cytochrome P450 4A12B (508 aa).

A signal peptide spans 1–37; it reads MSASALSSIRFPGSISEYLQVASVLSLLLLLFKTAQL. Heme is bound by residues glutamate 319 and cysteine 455.

It belongs to the cytochrome P450 family. Requires heme as cofactor. Expressed in lung, but almost undetectable in the kidneys of five different strains.

Its subcellular location is the endoplasmic reticulum membrane. It is found in the microsome membrane. It catalyses the reaction an organic molecule + reduced [NADPH--hemoprotein reductase] + O2 = an alcohol + oxidized [NADPH--hemoprotein reductase] + H2O + H(+). It carries out the reaction dodecanoate + reduced [NADPH--hemoprotein reductase] + O2 = 11-hydroxydodecanoate + oxidized [NADPH--hemoprotein reductase] + H2O + H(+). The catalysed reaction is dodecanoate + reduced [NADPH--hemoprotein reductase] + O2 = 12-hydroxydodecanoate + oxidized [NADPH--hemoprotein reductase] + H2O + H(+). The enzyme catalyses (5Z,8Z,11Z,14Z)-eicosatetraenoate + reduced [NADPH--hemoprotein reductase] + O2 = 18-hydroxy-(5Z,8Z,11Z,14Z)-eicosatetraenoate + oxidized [NADPH--hemoprotein reductase] + H2O + H(+). It catalyses the reaction (5Z,8Z,11Z,14Z)-eicosatetraenoate + reduced [NADPH--hemoprotein reductase] + O2 = 19-hydroxy-(5Z,8Z,11Z,14Z)-eicosatetraenoate + oxidized [NADPH--hemoprotein reductase] + H2O + H(+). It carries out the reaction (5Z,8Z,11Z,14Z)-eicosatetraenoate + reduced [NADPH--hemoprotein reductase] + O2 = 20-hydroxy-(5Z,8Z,11Z,14Z)-eicosatetraenoate + oxidized [NADPH--hemoprotein reductase] + H2O + H(+). The catalysed reaction is (5Z,8Z,11Z,14Z,17Z)-eicosapentaenoate + reduced [NADPH--hemoprotein reductase] + O2 = 19-hydroxy-(5Z,8Z,11Z,14Z,17Z)-eicosapentaenoate + oxidized [NADPH--hemoprotein reductase] + H2O + H(+). The enzyme catalyses (5Z,8Z,11Z,14Z,17Z)-eicosapentaenoate + reduced [NADPH--hemoprotein reductase] + O2 = 20-hydroxy-(5Z,8Z,11Z,14Z,17Z)-eicosapentaenoate + oxidized [NADPH--hemoprotein reductase] + H2O + H(+). It catalyses the reaction (5Z,8Z,11Z,14Z,17Z)-eicosapentaenoate + reduced [NADPH--hemoprotein reductase] + O2 = (17S,18R)-epoxy-(5Z,8Z,11Z,14Z)-eicosatetraenoate + oxidized [NADPH--hemoprotein reductase] + H2O + H(+). It carries out the reaction (5Z,8Z,11Z,14Z,17Z)-eicosapentaenoate + reduced [NADPH--hemoprotein reductase] + O2 = (17R,18S)-epoxy-(5Z,8Z,11Z,14Z)-eicosatetraenoate + oxidized [NADPH--hemoprotein reductase] + H2O + H(+). Its pathway is lipid metabolism; fatty acid metabolism. Activated by cytochrome b5. The Vmax almost doubles in the presence of cytochrome b5. A cytochrome P450 monooxygenase involved in the metabolism of fatty acids and their oxygenated derivatives (oxylipins). Mechanistically, uses molecular oxygen inserting one oxygen atom into a substrate, and reducing the second into a water molecule, with two electrons provided by NADPH via cytochrome P450 reductase (CPR; NADPH-ferrihemoprotein reductase). Catalyzes predominantly the oxidation of the terminal carbon (omega-oxidation) of saturated and unsaturated fatty acids. May act as a major omega-hydroxylase for dodecanoic (lauric) acid in kidney. Participates in omega-hydroxylation of (5Z,8Z,11Z,14Z)-eicosatetraenoic acid (arachidonate) to 20-hydroxyeicosatetraenoic acid (20-HETE), a signaling molecule acting both as vasoconstrictive and natriuretic with overall effect on arterial blood pressure. Acts as an omega-hydroxylase and epoxidase toward (5Z,8Z,11Z,14Z,17Z)-eicosapentaenoc acid (EPA). Catalyzes the epoxidation of the last double bond of EPA with no preferred stereoselectivity, producing both (R,S) and (S,R) stereoisomers. Can also catalyze the omega-1 and omega-2 oxidation of fatty acids with lower efficiency. In Mus musculus (Mouse), this protein is Cytochrome P450 4A12B.